Reading from the N-terminus, the 297-residue chain is Small ribosomal subunit protein uS2 (297 aa).

A disordered region spans residues 252–297; it reads GVPGTAFSAATAAPTSWEADGGDWAASSAAPAGESWAETQPAEAKW. Positions 256-289 are enriched in low complexity; that stretch reads TAFSAATAAPTSWEADGGDWAASSAAPAGESWAE.

It belongs to the universal ribosomal protein uS2 family. As to quaternary structure, component of the small ribosomal subunit. Mature ribosomes consist of a small (40S) and a large (60S) subunit. The 40S subunit contains about 33 different proteins and 1 molecule of RNA (18S). The 60S subunit contains about 49 different proteins and 3 molecules of RNA (25S, 5.8S and 5S). Interacts with rps21.

It localises to the cytoplasm. Its function is as follows. Required for the assembly and/or stability of the 40S ribosomal subunit. Required for the processing of the 20S rRNA-precursor to mature 18S rRNA in a late step of the maturation of 40S ribosomal subunits. This is Small ribosomal subunit protein uS2 (rps0) from Aspergillus fumigatus (strain CBS 144.89 / FGSC A1163 / CEA10) (Neosartorya fumigata).